Reading from the N-terminus, the 393-residue chain is tRNA(Met) cytidine acetate ligase (393 aa).

Positions 81, 142, and 167 each coordinate ATP.

It belongs to the TmcAL family.

The protein resides in the cytoplasm. The catalysed reaction is cytidine(34) in elongator tRNA(Met) + acetate + ATP = N(4)-acetylcytidine(34) in elongator tRNA(Met) + AMP + diphosphate. Functionally, catalyzes the formation of N(4)-acetylcytidine (ac(4)C) at the wobble position of elongator tRNA(Met), using acetate and ATP as substrates. First activates an acetate ion to form acetyladenylate (Ac-AMP) and then transfers the acetyl group to tRNA to form ac(4)C34. The sequence is that of tRNA(Met) cytidine acetate ligase from Bacillus cereus (strain ATCC 10987 / NRS 248).